A 292-amino-acid polypeptide reads, in one-letter code: Ventral anterior homeobox 2 (292 aa).

The span at 1–36 (MGDGGAERDRGPKRREEPGGRSGCRGEHRGAEDLRA) shows a compositional bias: basic and acidic residues. A disordered region spans residues 1-74 (MGDGGAERDR…DGQQALGETD (74 aa)). Residues 38 to 55 (TGSTSPREIAGTSASSPA) are compositionally biased toward polar residues. The homeobox DNA-binding region spans 102-161 (PKRTRTSFTAEQLYRLEMEFQRCQYVVGRERTELARQLNLSETQVKVWFQNRRTKQKKDQ). Positions 212 to 241 (AGHRGTSLGDPRNSSQRLNPMPSASASSPL) are disordered.

This sequence belongs to the EMX homeobox family.

It is found in the nucleus. Transcription factor that may function in dorsoventral specification of the forebrain. Regulates the expression of Wnt signaling antagonists including the expression of a truncated TCF7L2 isoform that cannot bind CTNNB1 and acts therefore as a potent dominant-negative Wnt antagonist. Plays a crucial role in eye development and, in particular, in the specification of the ventral optic vesicle. May be a regulator of axial polarization in the retina. The sequence is that of Ventral anterior homeobox 2 (Vax2) from Rattus norvegicus (Rat).